A 243-amino-acid chain; its full sequence is Protein-L-isoaspartate O-methyltransferase 2 (243 aa).

A disordered region spans residues 21–42 (DACADRGHPSAERSTPETERRR). Residues 23 to 42 (CADRGHPSAERSTPETERRR) show a composition bias toward basic and acidic residues. Ser-94 is an active-site residue.

It belongs to the methyltransferase superfamily. L-isoaspartyl/D-aspartyl protein methyltransferase family.

It is found in the cytoplasm. It carries out the reaction [protein]-L-isoaspartate + S-adenosyl-L-methionine = [protein]-L-isoaspartate alpha-methyl ester + S-adenosyl-L-homocysteine. Its function is as follows. Catalyzes the methyl esterification of L-isoaspartyl residues in peptides and proteins that result from spontaneous decomposition of normal L-aspartyl and L-asparaginyl residues. It plays a role in the repair and/or degradation of damaged proteins. This chain is Protein-L-isoaspartate O-methyltransferase 2, found in Anaeromyxobacter sp. (strain Fw109-5).